A 458-amino-acid chain; its full sequence is MQPATLQWSSYVLQLRVTTTAILKPGELRLFKCGLGITPPSSAVVCICRDESSFTSSPFTYIDPKDYGNIPFAVQNISDLDLDLSRLPIVLNIFALPHANVNISNLPVQRIEAHDRHIIPHGQCDAKFVIYGPLTRIKIQVADIRWIEQTPEEPTRYSFKAEIWVNLQNTPLDQIFKTGNIEFISHKNVYISRILLCGNLLILKANYENDYLLDDNFYPEQLAIQISLTPQTADITLSQNQETLLKCNTHSITVCATKNIIPNTVTPVHCSFNTIFNSNSNFTGLFIPKLLLGISTTTGIWDETRPLYITMKAFKKNRRINYSQPIGVVYFFPKQILPPGNNVEFNWTEASKIYVNTESPNGPVRNTVTFTNQAVLRTPSLSTVANLTPDINMGIFLSSLRVAFDTAHMVPLHFSLKPGESTRMEFMPPGTPQNLTILEGDVGIHFIPCHNHSHRSSP.

Asparagine 76, asparagine 102, asparagine 281, asparagine 321, asparagine 346, asparagine 434, and asparagine 451 each carry an N-linked (GlcNAc...) asparagine; by host glycan.

Belongs to the herpesviridae UL82 family.

The chain is Protein U54 (U54) from Homo sapiens (Human).